The primary structure comprises 1405 residues: DNA-directed RNA polymerase subunit beta' (1405 aa).

4 residues coordinate Zn(2+): cysteine 71, cysteine 73, cysteine 86, and cysteine 89. Mg(2+)-binding residues include aspartate 462, aspartate 464, and aspartate 466. Zn(2+) is bound by residues cysteine 810, cysteine 884, cysteine 891, and cysteine 894.

Belongs to the RNA polymerase beta' chain family. As to quaternary structure, the RNAP catalytic core consists of 2 alpha, 1 beta, 1 beta' and 1 omega subunit. When a sigma factor is associated with the core the holoenzyme is formed, which can initiate transcription. Mg(2+) serves as cofactor. The cofactor is Zn(2+).

The catalysed reaction is RNA(n) + a ribonucleoside 5'-triphosphate = RNA(n+1) + diphosphate. In terms of biological role, DNA-dependent RNA polymerase catalyzes the transcription of DNA into RNA using the four ribonucleoside triphosphates as substrates. This is DNA-directed RNA polymerase subunit beta' from Maricaulis maris (strain MCS10) (Caulobacter maris).